We begin with the raw amino-acid sequence, 422 residues long: Gamma-glutamyl phosphate reductase (422 aa).

It belongs to the gamma-glutamyl phosphate reductase family.

Its subcellular location is the cytoplasm. It catalyses the reaction L-glutamate 5-semialdehyde + phosphate + NADP(+) = L-glutamyl 5-phosphate + NADPH + H(+). It participates in amino-acid biosynthesis; L-proline biosynthesis; L-glutamate 5-semialdehyde from L-glutamate: step 2/2. Its function is as follows. Catalyzes the NADPH-dependent reduction of L-glutamate 5-phosphate into L-glutamate 5-semialdehyde and phosphate. The product spontaneously undergoes cyclization to form 1-pyrroline-5-carboxylate. The chain is Gamma-glutamyl phosphate reductase from Shewanella piezotolerans (strain WP3 / JCM 13877).